The following is an 80-amino-acid chain: Mitotic-spindle organizing protein 1 (80 aa).

Belongs to the MOZART1 family. Part of the gamma-tubulin complex.

Its subcellular location is the cytoplasm. The protein localises to the cytoskeleton. The protein resides in the microtubule organizing center. It is found in the spindle pole body. Functionally, required for gamma-tubulin complex recruitment to the microtubule organizing center (MTOC). This chain is Mitotic-spindle organizing protein 1, found in Pyricularia oryzae (strain 70-15 / ATCC MYA-4617 / FGSC 8958) (Rice blast fungus).